The sequence spans 473 residues: Bifunctional protein HldE (473 aa).

The interval 1–317 is ribokinase; it reads MTHGLPHFTS…LQQALHPRAI (317 aa). 195 to 198 serves as a coordination point for ATP; it reads NLAE. The active site involves aspartate 264. The cytidylyltransferase stretch occupies residues 343-473; the sequence is MTNGCFDILH…SQIIDIIRKN (131 aa).

This sequence in the N-terminal section; belongs to the carbohydrate kinase PfkB family. It in the C-terminal section; belongs to the cytidylyltransferase family. Homodimer.

The catalysed reaction is D-glycero-beta-D-manno-heptose 7-phosphate + ATP = D-glycero-beta-D-manno-heptose 1,7-bisphosphate + ADP + H(+). The enzyme catalyses D-glycero-beta-D-manno-heptose 1-phosphate + ATP + H(+) = ADP-D-glycero-beta-D-manno-heptose + diphosphate. It participates in nucleotide-sugar biosynthesis; ADP-L-glycero-beta-D-manno-heptose biosynthesis; ADP-L-glycero-beta-D-manno-heptose from D-glycero-beta-D-manno-heptose 7-phosphate: step 1/4. Its pathway is nucleotide-sugar biosynthesis; ADP-L-glycero-beta-D-manno-heptose biosynthesis; ADP-L-glycero-beta-D-manno-heptose from D-glycero-beta-D-manno-heptose 7-phosphate: step 3/4. Catalyzes the phosphorylation of D-glycero-D-manno-heptose 7-phosphate at the C-1 position to selectively form D-glycero-beta-D-manno-heptose-1,7-bisphosphate. Functionally, catalyzes the ADP transfer from ATP to D-glycero-beta-D-manno-heptose 1-phosphate, yielding ADP-D-glycero-beta-D-manno-heptose. This Nitrosococcus oceani (strain ATCC 19707 / BCRC 17464 / JCM 30415 / NCIMB 11848 / C-107) protein is Bifunctional protein HldE.